Reading from the N-terminus, the 335-residue chain is Glycerol-3-phosphate dehydrogenase [NAD(P)+] (335 aa).

NADPH is bound by residues tryptophan 11, arginine 30, and lysine 106. Positions 106, 135, and 137 each coordinate sn-glycerol 3-phosphate. Alanine 139 contacts NADPH. Sn-glycerol 3-phosphate-binding residues include lysine 190, aspartate 243, serine 253, arginine 254, and asparagine 255. Catalysis depends on lysine 190, which acts as the Proton acceptor. Arginine 254 is a binding site for NADPH. 2 residues coordinate NADPH: valine 278 and glutamate 280.

This sequence belongs to the NAD-dependent glycerol-3-phosphate dehydrogenase family.

It localises to the cytoplasm. The enzyme catalyses sn-glycerol 3-phosphate + NAD(+) = dihydroxyacetone phosphate + NADH + H(+). It catalyses the reaction sn-glycerol 3-phosphate + NADP(+) = dihydroxyacetone phosphate + NADPH + H(+). It participates in membrane lipid metabolism; glycerophospholipid metabolism. Functionally, catalyzes the reduction of the glycolytic intermediate dihydroxyacetone phosphate (DHAP) to sn-glycerol 3-phosphate (G3P), the key precursor for phospholipid synthesis. The polypeptide is Glycerol-3-phosphate dehydrogenase [NAD(P)+] (Paucimonas lemoignei (Pseudomonas lemoignei)).